The sequence spans 312 residues: tRNA uridine(34) hydroxylase (312 aa).

The region spanning 123–216 is the Rhodanese domain; it reads DRDDVVVLDV…YGIEQGGEDF (94 aa). The active-site Cysteine persulfide intermediate is cysteine 176.

Belongs to the TrhO family.

The catalysed reaction is uridine(34) in tRNA + AH2 + O2 = 5-hydroxyuridine(34) in tRNA + A + H2O. In terms of biological role, catalyzes oxygen-dependent 5-hydroxyuridine (ho5U) modification at position 34 in tRNAs. The chain is tRNA uridine(34) hydroxylase from Cytophaga hutchinsonii (strain ATCC 33406 / DSM 1761 / CIP 103989 / NBRC 15051 / NCIMB 9469 / D465).